We begin with the raw amino-acid sequence, 191 residues long: Potassium-transporting ATPase KdpC subunit (191 aa).

A helical membrane pass occupies residues 7–27; that stretch reads ASLVLFLSLTLLTGVAYPLLV.

This sequence belongs to the KdpC family. In terms of assembly, the system is composed of three essential subunits: KdpA, KdpB and KdpC.

The protein resides in the cell inner membrane. In terms of biological role, part of the high-affinity ATP-driven potassium transport (or Kdp) system, which catalyzes the hydrolysis of ATP coupled with the electrogenic transport of potassium into the cytoplasm. This subunit acts as a catalytic chaperone that increases the ATP-binding affinity of the ATP-hydrolyzing subunit KdpB by the formation of a transient KdpB/KdpC/ATP ternary complex. This chain is Potassium-transporting ATPase KdpC subunit, found in Methylibium petroleiphilum (strain ATCC BAA-1232 / LMG 22953 / PM1).